The sequence spans 161 residues: ATP synthase subunit b (161 aa).

The chain crosses the membrane as a helical span at residues Ile-12–Leu-32.

It belongs to the ATPase B chain family. In terms of assembly, F-type ATPases have 2 components, F(1) - the catalytic core - and F(0) - the membrane proton channel. F(1) has five subunits: alpha(3), beta(3), gamma(1), delta(1), epsilon(1). F(0) has three main subunits: a(1), b(2) and c(10-14). The alpha and beta chains form an alternating ring which encloses part of the gamma chain. F(1) is attached to F(0) by a central stalk formed by the gamma and epsilon chains, while a peripheral stalk is formed by the delta and b chains.

Its subcellular location is the cell membrane. Functionally, f(1)F(0) ATP synthase produces ATP from ADP in the presence of a proton or sodium gradient. F-type ATPases consist of two structural domains, F(1) containing the extramembraneous catalytic core and F(0) containing the membrane proton channel, linked together by a central stalk and a peripheral stalk. During catalysis, ATP synthesis in the catalytic domain of F(1) is coupled via a rotary mechanism of the central stalk subunits to proton translocation. In terms of biological role, component of the F(0) channel, it forms part of the peripheral stalk, linking F(1) to F(0). This is ATP synthase subunit b from Wigglesworthia glossinidia brevipalpis.